The chain runs to 680 residues: DNA-directed RNA polymerase subunit beta' (680 aa).

4 residues coordinate Zn(2+): Cys-69, Cys-71, Cys-87, and Cys-90. Positions 489, 491, and 493 each coordinate Mg(2+).

This sequence belongs to the RNA polymerase beta' chain family. RpoC1 subfamily. In terms of assembly, in plastids the minimal PEP RNA polymerase catalytic core is composed of four subunits: alpha, beta, beta', and beta''. When a (nuclear-encoded) sigma factor is associated with the core the holoenzyme is formed, which can initiate transcription. Mg(2+) is required as a cofactor. Zn(2+) serves as cofactor.

It localises to the plastid. It is found in the chloroplast. The catalysed reaction is RNA(n) + a ribonucleoside 5'-triphosphate = RNA(n+1) + diphosphate. Functionally, DNA-dependent RNA polymerase catalyzes the transcription of DNA into RNA using the four ribonucleoside triphosphates as substrates. This chain is DNA-directed RNA polymerase subunit beta', found in Barbarea verna (Land cress).